Reading from the N-terminus, the 339-residue chain is GTP 3',8-cyclase (339 aa).

Positions 13–249 (RYGRPLRDLR…GEVAQRHAFA (237 aa)) constitute a Radical SAM core domain. Arginine 22 serves as a coordination point for GTP. [4Fe-4S] cluster is bound by residues cysteine 29 and cysteine 33. Tyrosine 35 is a binding site for S-adenosyl-L-methionine. Residue cysteine 36 participates in [4Fe-4S] cluster binding. Arginine 75 lines the GTP pocket. Glycine 79 contacts S-adenosyl-L-methionine. Threonine 106 is a binding site for GTP. Serine 130 provides a ligand contact to S-adenosyl-L-methionine. Lysine 168 is a binding site for GTP. Methionine 202 is a binding site for S-adenosyl-L-methionine. Positions 266 and 269 each coordinate [4Fe-4S] cluster. Residue 271-273 (RAR) participates in GTP binding. Residue cysteine 283 participates in [4Fe-4S] cluster binding.

It belongs to the radical SAM superfamily. MoaA family. Monomer and homodimer. Requires [4Fe-4S] cluster as cofactor.

The enzyme catalyses GTP + AH2 + S-adenosyl-L-methionine = (8S)-3',8-cyclo-7,8-dihydroguanosine 5'-triphosphate + 5'-deoxyadenosine + L-methionine + A + H(+). It functions in the pathway cofactor biosynthesis; molybdopterin biosynthesis. Catalyzes the cyclization of GTP to (8S)-3',8-cyclo-7,8-dihydroguanosine 5'-triphosphate. The sequence is that of GTP 3',8-cyclase from Xanthomonas campestris pv. campestris (strain 8004).